Here is a 552-residue protein sequence, read N- to C-terminus: CTP synthase (552 aa).

The tract at residues 1–265 (MTKYIFITGG…DEIVVRKLRL (265 aa)) is amidoligase domain. S13 contacts CTP. S13 is a binding site for UTP. Residues 14–19 (SLGKGI) and D71 contribute to the ATP site. Positions 71 and 139 each coordinate Mg(2+). CTP is bound by residues 146–148 (DIE), 186–191 (KTKPTQ), and K222. Residues 186–191 (KTKPTQ) and K222 each bind UTP. In terms of domain architecture, Glutamine amidotransferase type-1 spans 290-541 (TVAMVGKYVN…VRAARARSEG (252 aa)). L-glutamine is bound at residue G351. Catalysis depends on C378, which acts as the Nucleophile; for glutamine hydrolysis. L-glutamine-binding positions include 379–382 (LGMQ), E402, and R469. Catalysis depends on residues H514 and E516.

The protein belongs to the CTP synthase family. As to quaternary structure, homotetramer.

It carries out the reaction UTP + L-glutamine + ATP + H2O = CTP + L-glutamate + ADP + phosphate + 2 H(+). The catalysed reaction is L-glutamine + H2O = L-glutamate + NH4(+). The enzyme catalyses UTP + NH4(+) + ATP = CTP + ADP + phosphate + 2 H(+). Its pathway is pyrimidine metabolism; CTP biosynthesis via de novo pathway; CTP from UDP: step 2/2. With respect to regulation, allosterically activated by GTP, when glutamine is the substrate; GTP has no effect on the reaction when ammonia is the substrate. The allosteric effector GTP functions by stabilizing the protein conformation that binds the tetrahedral intermediate(s) formed during glutamine hydrolysis. Inhibited by the product CTP, via allosteric rather than competitive inhibition. Functionally, catalyzes the ATP-dependent amination of UTP to CTP with either L-glutamine or ammonia as the source of nitrogen. Regulates intracellular CTP levels through interactions with the four ribonucleotide triphosphates. This Methylococcus capsulatus (strain ATCC 33009 / NCIMB 11132 / Bath) protein is CTP synthase.